A 67-amino-acid chain; its full sequence is MKPDIHPDYTTVTVSCSCGNTFETRSTIGKDFHVEVCSACHPFYTGKQKIVDTAGRVDKFRRKYGRG.

4 residues coordinate Zn(2+): Cys-16, Cys-18, Cys-37, and Cys-40.

The protein belongs to the bacterial ribosomal protein bL31 family. Type A subfamily. As to quaternary structure, part of the 50S ribosomal subunit. Requires Zn(2+) as cofactor.

In terms of biological role, binds the 23S rRNA. This Methylococcus capsulatus (strain ATCC 33009 / NCIMB 11132 / Bath) protein is Large ribosomal subunit protein bL31.